The sequence spans 101 residues: Apolipoprotein C-II (101 aa).

The N-terminal stretch at 1–22 (MGTRLLPALFLVLLVLGFEVQG) is a signal peptide. The O-glycosylated at one site stretch occupies residues 23–38 (TQQPQQDEMPSPTFLT). Positions 66–74 (AVDEKLRDL) are lipid binding. Residues 78 to 101 (STAAMSTYTGIFTDQVLSVLKGEE) are lipoprotein lipase cofactor.

This sequence belongs to the apolipoprotein C2 family. In terms of processing, proapolipoprotein C-II is synthesized as a sialic acid containing glycoprotein which is subsequently desialylated prior to its proteolytic processing. Post-translationally, proapolipoprotein C-II, the major form found in plasma undergoes proteolytic cleavage of its N-terminal hexapeptide to generate apolipoprotein C-II, which occurs as the minor form in plasma. Liver and intestine.

It localises to the secreted. Component of chylomicrons, very low-density lipoproteins (VLDL), low-density lipoproteins (LDL), and high-density lipoproteins (HDL) in plasma. Plays an important role in lipoprotein metabolism as an activator of lipoprotein lipase. Both proapolipoprotein C-II and apolipoprotein C-II can activate lipoprotein lipase. In normolipidemic individuals, it is mainly distributed in the HDL, whereas in hypertriglyceridemic individuals, predominantly found in the VLDL and LDL. The sequence is that of Apolipoprotein C-II (APOC2) from Homo sapiens (Human).